Reading from the N-terminus, the 256-residue chain is Triosephosphate isomerase (256 aa).

Substrate is bound at residue 10–12 (NWK). The active-site Electrophile is the His-96. Catalysis depends on Glu-168, which acts as the Proton acceptor. Substrate-binding residues include Gly-174 and Ser-213.

The protein belongs to the triosephosphate isomerase family. Homodimer.

It is found in the cytoplasm. The enzyme catalyses D-glyceraldehyde 3-phosphate = dihydroxyacetone phosphate. It participates in carbohydrate biosynthesis; gluconeogenesis. Its pathway is carbohydrate degradation; glycolysis; D-glyceraldehyde 3-phosphate from glycerone phosphate: step 1/1. Involved in the gluconeogenesis. Catalyzes stereospecifically the conversion of dihydroxyacetone phosphate (DHAP) to D-glyceraldehyde-3-phosphate (G3P). The protein is Triosephosphate isomerase of Wigglesworthia glossinidia brevipalpis.